The sequence spans 70 residues: Consomatin Mrc3 (70 aa).

Residues 1-22 (MQTAYWVMVMMMVWITAPLSEG) form the signal peptide. The propeptide occupies 23-55 (GKLNDVIRGLVPDDVTPKRILQSLISRRRFDGR). A disulfide bond links Cys62 and Cys67. Trp64 is subject to D-tryptophan. A 4-hydroxyproline modification is found at Pro68. Tyr69 is modified (tyrosine amide).

This sequence belongs to the conotoxin C superfamily. Consomatin family. In terms of tissue distribution, expressed by the venom duct.

The protein localises to the secreted. Moderately activates human somatostatin receptors (SSTR) with a preferential activation of SSTR1 and SSTR4. In vivo, does not cause behavioral changes in mice within a few minutes of intracranial injection, but causes a progressive loss of movement thereafter. Four to five hours after injection, mice recover, even with the highest dose tested. Shows antinociception and antihyperalgesia activities in two mouse models of acute pain, most probably by acting outside the central nervous system. The sequence is that of Consomatin Mrc3 from Conus mercator (Trader cone).